A 77-amino-acid polypeptide reads, in one-letter code: Probable Vpr-like protein (77 aa).

The Nuclear export signal signature appears at 34–42 (LIRLLQGLL). The Nuclear localization signal signature appears at 44–53 (RLRFRKPKSK).

The protein localises to the virion. It localises to the host nucleus. Functionally, seems to function as a Vpr-like protein, since it mediates host cell cycle arrest in G2 phase. Cell cycle arrest creates a favorable environment for maximizing viral expression and production. The sequence is that of Probable Vpr-like protein from Felidae (cat family).